The following is a 299-amino-acid chain: ATP phosphoribosyltransferase (299 aa).

This sequence belongs to the ATP phosphoribosyltransferase family. Long subfamily. In terms of assembly, equilibrium between an active dimeric form, an inactive hexameric form and higher aggregates. Interconversion between the various forms is largely reversible and is influenced by the natural substrates and inhibitors of the enzyme. It depends on Mg(2+) as a cofactor.

Its subcellular location is the cytoplasm. It carries out the reaction 1-(5-phospho-beta-D-ribosyl)-ATP + diphosphate = 5-phospho-alpha-D-ribose 1-diphosphate + ATP. The protein operates within amino-acid biosynthesis; L-histidine biosynthesis; L-histidine from 5-phospho-alpha-D-ribose 1-diphosphate: step 1/9. Its activity is regulated as follows. Feedback inhibited by histidine. Its function is as follows. Catalyzes the condensation of ATP and 5-phosphoribose 1-diphosphate to form N'-(5'-phosphoribosyl)-ATP (PR-ATP). Has a crucial role in the pathway because the rate of histidine biosynthesis seems to be controlled primarily by regulation of HisG enzymatic activity. This is ATP phosphoribosyltransferase from Buchnera aphidicola subsp. Acyrthosiphon pisum (strain 5A).